Reading from the N-terminus, the 490-residue chain is GTPase Der (490 aa).

EngA-type G domains are found at residues 3–166 (PVIA…PRDD) and 196–369 (IKIA…KSAV). Residues 9-16 (GRPNVGKS), 56-60 (DTGGI), and 118-121 (NKVD) each bind GTP. Positions 162 to 189 (FPRDDDEPAEGEEEEVVAEGEEAKRIPG) are disordered. The span at 164 to 181 (RDDDEPAEGEEEEVVAEG) shows a compositional bias: acidic residues. GTP is bound by residues 202 to 209 (GRPNVGKS), 249 to 253 (DTAGV), and 314 to 317 (NKWD). The 85-residue stretch at 370-454 (TRWPTSRLTQ…PIRIEFKGGE (85 aa)) folds into the KH-like domain. The tract at residues 453-490 (GENPYEGNKNTLTDRQVNKKRRLMSHNKKASKKRRDKK) is disordered. Residues 470–490 (NKKRRLMSHNKKASKKRRDKK) show a composition bias toward basic residues.

Belongs to the TRAFAC class TrmE-Era-EngA-EngB-Septin-like GTPase superfamily. EngA (Der) GTPase family. As to quaternary structure, associates with the 50S ribosomal subunit.

Its function is as follows. GTPase that plays an essential role in the late steps of ribosome biogenesis. The polypeptide is GTPase Der (Pseudomonas fluorescens (strain Pf0-1)).